Consider the following 299-residue polypeptide: MQNELDAYFEYLRSARQLSGHSLDAYRRDLDKVLTYCERERIAGWRDLQGRHLRHLIAEQHRQGQSSRSLARLLSSVRGLYRYLNQEGLCEHDPATGLSAPKGERRLPRLLDTDRAMQLLDGGVEDDFIARRDQAMLELFYSSGLRLSELVGLNLDQLDLAAGLVRVLGKGNKVRELPVGSKAREALQAWLPLRTLAGPADGAVFIGQQGRRLGARAVQLRVRQAGVRELGQHLHPHMLRHSFASHLLESSQDLRSVQELLGHADIGTTQIYTHLDFQHLAKVYDHAHPRAKRKQDTDT.

The region spanning 1–85 (MQNELDAYFE…SVRGLYRYLN (85 aa)) is the Core-binding (CB) domain. The Tyr recombinase domain maps to 106-285 (RLPRLLDTDR…DFQHLAKVYD (180 aa)). Residues R146, K170, H237, R240, and H263 contribute to the active site. Y272 serves as the catalytic O-(3'-phospho-DNA)-tyrosine intermediate.

The protein belongs to the 'phage' integrase family. XerC subfamily. As to quaternary structure, forms a cyclic heterotetrameric complex composed of two molecules of XerC and two molecules of XerD.

The protein localises to the cytoplasm. Functionally, site-specific tyrosine recombinase, which acts by catalyzing the cutting and rejoining of the recombining DNA molecules. The XerC-XerD complex is essential to convert dimers of the bacterial chromosome into monomers to permit their segregation at cell division. It also contributes to the segregational stability of plasmids. The chain is Tyrosine recombinase XerC from Stutzerimonas stutzeri (strain A1501) (Pseudomonas stutzeri).